Reading from the N-terminus, the 393-residue chain is MAQVNIRRDVEDQFYRYKMEVLQGKVEGKGNGIKTVIVNLPNIARDLDRQPEYITKFFEIEFNAKSNIENEKYSINGQYTVERLASALDKFISKFVLCSFCKNPETKFVIKKGVIEFKCAACGRVGPIDMKHKLTSYIVKNPPKAVSTKSTHDEALAQQPQIKKEKKSKKKKDDDDEEDDVVWFTDTSEKAAEERKKKAIGDSTSAVISMMADISVEPQSAKEEQDEDDEQEEGQEKESDPVSSISSFLETNPADQELMEKLDSVQEEFGLRSSATSKAAIEALCKNAENTIKFVKTQTALLKKISKRRDGKLGILLGFEELCVKDETLLKSIQGILKNLFDAGILTEENILKWYHQKAKSKVVIKACKDFIAWLETAEEEEEDEEEDEEDDS.

28-35 (GKGNGIKT) is a GTP binding site. Disordered stretches follow at residues 144-179 (KAVS…DEED) and 217-247 (EPQS…SISS). The 163-residue stretch at 223 to 385 (EEQDEDDEQE…ETAEEEEEDE (163 aa)) folds into the W2 domain. A compositionally biased stretch (acidic residues) spans 224-233 (EQDEDDEQEE).

Belongs to the eIF-2-beta/eIF-5 family.

Its function is as follows. Catalyzes the hydrolysis of GTP bound to the 40S ribosomal initiation complex (40S.mRNA.Met-tRNA[F].eIF-2.GTP) with the subsequent joining of a 60S ribosomal subunit resulting in the release of eIF-2 and the guanine nucleotide. The subsequent joining of a 60S ribosomal subunit results in the formation of a functional 80S initiation complex (80S.mRNA.Met-tRNA[F]). This chain is Eukaryotic translation initiation factor 5 (eif5), found in Dictyostelium discoideum (Social amoeba).